The chain runs to 1169 residues: Zinc finger protein 862 (1169 aa).

A KRAB 1 domain is found at 11 to 77 (VTFDDITVYL…SVQGQRSLLE (67 aa)). The TTF-type 1 zinc-finger motif lies at 135 to 218 (KPRSIQKSWF…RDPIWAARFR (84 aa)). The region spanning 333–404 (VVFEDVAVYF…DPNGPKWGKG (72 aa)) is the KRAB 2 domain. The TTF-type 2 zinc finger occupies 461–544 (RPRSIQRSWF…KEDTPHTALV (84 aa)).

The protein resides in the nucleus. In terms of biological role, may be involved in transcriptional regulation. The protein is Zinc finger protein 862 (ZNF862) of Homo sapiens (Human).